The chain runs to 289 residues: Glycine--tRNA ligase alpha subunit (289 aa).

This sequence belongs to the class-II aminoacyl-tRNA synthetase family. In terms of assembly, tetramer of two alpha and two beta subunits.

It localises to the cytoplasm. It carries out the reaction tRNA(Gly) + glycine + ATP = glycyl-tRNA(Gly) + AMP + diphosphate. The sequence is that of Glycine--tRNA ligase alpha subunit from Rickettsia felis (strain ATCC VR-1525 / URRWXCal2) (Rickettsia azadi).